A 290-amino-acid polypeptide reads, in one-letter code: Dehydrodolichyl diphosphate synthase CPT3 (290 aa).

Asp42 is a catalytic residue.

Belongs to the UPP synthase family. Mg(2+) serves as cofactor. In terms of tissue distribution, expressed in leaf trichomes and stem trichomes. Expressed at low levels in young leaves, stems and old leaves.

Its subcellular location is the cytoplasm. The protein resides in the cytosol. The catalysed reaction is n isopentenyl diphosphate + (2E,6E)-farnesyl diphosphate = a di-trans,poly-cis-polyprenyl diphosphate + n diphosphate. Its function is as follows. Catalyzes cis-prenyl chain elongation to produce the polyprenyl backbone of dolichol, a glycosyl carrier-lipid required for the biosynthesis of several classes of glycoprotein. The polypeptide is Dehydrodolichyl diphosphate synthase CPT3 (Solanum lycopersicum (Tomato)).